Consider the following 282-residue polypeptide: Probable endonuclease 4 (282 aa).

9 residues coordinate Zn(2+): His-69, His-109, Glu-145, Asp-179, His-182, His-216, Asp-229, His-231, and Glu-261.

It belongs to the AP endonuclease 2 family. Zn(2+) is required as a cofactor.

The enzyme catalyses Endonucleolytic cleavage to 5'-phosphooligonucleotide end-products.. Its function is as follows. Endonuclease IV plays a role in DNA repair. It cleaves phosphodiester bonds at apurinic or apyrimidinic (AP) sites, generating a 3'-hydroxyl group and a 5'-terminal sugar phosphate. This is Probable endonuclease 4 from Chlorobium chlorochromatii (strain CaD3).